Reading from the N-terminus, the 466-residue chain is RUS family member 1 (466 aa).

A2 carries the post-translational modification N-acetylalanine. The helical transmembrane segment at 245 to 265 threads the bilayer; the sequence is LLMLPLVSDCLSLSLGCFILL.

It belongs to the RUS1 family.

Its subcellular location is the membrane. The protein is RUS family member 1 (Rusf1) of Rattus norvegicus (Rat).